Consider the following 284-residue polypeptide: Esterase alnB (284 aa).

Catalysis depends on charge relay system residues serine 93, aspartate 226, and histidine 255.

It belongs to the LovG family.

It participates in polyketide biosynthesis. In terms of biological role, esterase; part of the gene cluster that mediates the biosynthesis of asperlin, a polyketide showing anti-inflammatory, antitumor and antibiotic activities. The first step of the asperlin biosynthesis is the production of the intermediate 2,4,6-octatrienoic acid by the highly redusing polyketide synthase alnA with cleavage of the PKS product by the esterase alnB. 2,4,6-octatrienoic acid is further converted to asperlin via several steps involving the remaining enzymes from the cluster. This chain is Esterase alnB, found in Emericella nidulans (strain FGSC A4 / ATCC 38163 / CBS 112.46 / NRRL 194 / M139) (Aspergillus nidulans).